Here is a 393-residue protein sequence, read N- to C-terminus: Putative cytochrome P450 143 (393 aa).

Heme is bound at residue Cys342.

Belongs to the cytochrome P450 family. Heme serves as cofactor.

The protein is Putative cytochrome P450 143 (cyp143) of Mycobacterium bovis (strain ATCC BAA-935 / AF2122/97).